Consider the following 788-residue polypeptide: Protein translocase subunit SecA 2 (788 aa).

ATP contacts are provided by residues glutamine 77, 95 to 99 (GEGKT), and aspartate 491.

The protein belongs to the SecA family. In terms of assembly, monomer and homodimer. Part of the essential Sec protein translocation apparatus which comprises SecA, SecYEG and auxiliary proteins SecDF. Other proteins may also be involved.

It is found in the cell membrane. The protein localises to the cytoplasm. The catalysed reaction is ATP + H2O + cellular proteinSide 1 = ADP + phosphate + cellular proteinSide 2.. In terms of biological role, part of the Sec protein translocase complex. Interacts with the SecYEG preprotein conducting channel. Has a central role in coupling the hydrolysis of ATP to the transfer of proteins into and across the cell membrane, serving as an ATP-driven molecular motor driving the stepwise translocation of polypeptide chains across the membrane. This is Protein translocase subunit SecA 2 from Lactobacillus johnsonii (strain CNCM I-12250 / La1 / NCC 533).